We begin with the raw amino-acid sequence, 212 residues long: TATA-box-binding protein 2 (212 aa).

2 repeat units span residues 30-114 (THPE…KKIG) and 120-201 (SNFN…YPIL).

It belongs to the TBP family. In terms of assembly, belongs to the TFIID complex together with the TBP-associated factors (TAFs). Binds DNA as monomer.

It localises to the nucleus. General transcription factor that functions at the core of the DNA-binding multiprotein factor TFIID. Binding of TFIID to the TATA box is the initial transcriptional step of the pre-initiation complex (PIC), playing a role in the activation of eukaryotic genes transcribed by RNA polymerase II. The chain is TATA-box-binding protein 2 from Entamoeba histolytica (strain ATCC 30459 / HM-1:IMSS / ABRM).